Consider the following 2042-residue polypeptide: Cell adhesion molecule DSCAML1 (2042 aa).

The signal sequence occupies residues 1 to 17; that stretch reads MWLVTFFLLYSLRKAHT. At 18 to 1592 the chain is on the extracellular side; the sequence is EDVGTSLYFV…AQGEGDDVKK (1575 aa). Residues Asn-28 and Asn-78 are each glycosylated (N-linked (GlcNAc...) asparagine). 9 Ig-like C2-type domains span residues 37-107, 114-216, 227-311, 315-403, 409-502, 507-587, 597-686, 691-785, and 789-886; these read SSTV…AENS, PNIR…ARLS, PTML…GTLT, PLRV…SIIT, PRIV…ARIN, PSIR…LSIS, PPLI…RQLI, PRFV…MFLT, and PAMI…LTVQ. Intrachain disulfides connect Cys-46/Cys-102, Cys-145/Cys-197, Cys-248/Cys-295, Cys-337/Cys-387, and Cys-430/Cys-486. N-linked (GlcNAc...) asparagine glycosylation is found at Asn-369, Asn-472, Asn-514, Asn-557, Asn-667, Asn-711, Asn-750, Asn-797, and Asn-810. 2 disulfide bridges follow: Cys-527–Cys-576 and Cys-618–Cys-670. Cys-712 and Cys-768 form a disulfide bridge. A disulfide bond links Cys-811 and Cys-868. 4 consecutive Fibronectin type-III domains span residues 888 to 985, 990 to 1089, 1094 to 1190, and 1194 to 1289; these read PPDP…TEEA, PPMD…TLED, PPEN…TKED, and PPAG…AGKA. 6 N-linked (GlcNAc...) asparagine glycosylation sites follow: Asn-927, Asn-1083, Asn-1145, Asn-1163, Asn-1276, and Asn-1346. The Ig-like C2-type 10 domain occupies 1279–1368; sequence EKVTIEPAGK…SGYYTCTATN (90 aa). Cysteines 1312 and 1364 form a disulfide. Fibronectin type-III domains are found at residues 1384-1478 and 1479-1579; these read PPDQ…THGR and EPSF…TIPP. 3 N-linked (GlcNAc...) asparagine glycosylation sites follow: Asn-1493, Asn-1532, and Asn-1562. The chain crosses the membrane as a helical span at residues 1593-1613; that stretch reads LFTIACPIILATLGVALLFII. The Cytoplasmic segment spans residues 1614–2042; that stretch reads RKKRKEKRLK…GAYSKSYTLV (429 aa). Disordered stretches follow at residues 1716-1742, 1781-1805, 1841-1865, and 1940-2042; these read PLID…HSTR, SDSY…TESA, SSDQ…PSEP, and PPAR…YTLV. Over residues 1733-1742 the composition is skewed to basic residues; the sequence is KSVKSAHSTR. Polar residues-rich tracts occupy residues 1781 to 1790 and 1841 to 1863; these read SDSYSASLSQ and SSDQ…STPS. Pro residues predominate over residues 1951-1960; it reads AKPPGLPPPS. Residues 1961-1983 show a composition bias toward low complexity; the sequence is SSSSSTTLPQRTLPMPTAASTAP. A compositionally biased stretch (pro residues) spans 1984-1995; sequence APAPAPAAPAEP. Composition is skewed to low complexity over residues 1996-2005 and 2023-2034; these read PANTTTTTTT and GAGRAQKQGAGA.

Homodimer; mediates homophilic interactions to promote cell adhesion. In terms of tissue distribution, SDK1, SDK2, DSCAM and DSCAML1 are expressed in non-overlapping subsets of interneurons and retinal ganglion cells (RGCs) that form synapses in distinct inner plexiform layer (IPL) sublaminae.

It localises to the cell membrane. It is found in the synapse. Functionally, cell adhesion molecule that plays a role in neuronal self-avoidance. Promotes repulsion between specific neuronal processes of either the same cell or the same subtype of cells. Adhesion molecule that promotes lamina-specific synaptic connections in the retina: expressed in specific subsets of interneurons and retinal ganglion cells (RGCs) and promotes synaptic connectivity via homophilic interactions. The chain is Cell adhesion molecule DSCAML1 (DSCAML1) from Gallus gallus (Chicken).